A 61-amino-acid chain; its full sequence is Small ribosomal subunit protein uS14B (61 aa).

Residues Cys-24, Cys-27, Cys-40, and Cys-43 each contribute to the Zn(2+) site.

This sequence belongs to the universal ribosomal protein uS14 family. Zinc-binding uS14 subfamily. Part of the 30S ribosomal subunit. Contacts proteins S3 and S10. Zn(2+) is required as a cofactor.

Functionally, binds 16S rRNA, required for the assembly of 30S particles and may also be responsible for determining the conformation of the 16S rRNA at the A site. In Oceanobacillus iheyensis (strain DSM 14371 / CIP 107618 / JCM 11309 / KCTC 3954 / HTE831), this protein is Small ribosomal subunit protein uS14B.